The chain runs to 412 residues: Protein arginine N-methyltransferase 2 (412 aa).

Positions 48-65 (EKNRNGDKEFRESTDDNK) are enriched in basic and acidic residues. 2 disordered regions span residues 48–69 (EKNRNGDKEFRESTDDNKTSNT) and 169–189 (SVQTAVDGQKEESVGSDDDAT). Phosphoserine occurs at positions 181 and 184. In terms of domain architecture, RMT2 spans 189-412 (TAANQQVYLK…YYYHPRITFA (224 aa)). Residues Y196, M226, 250–255 (FGMGII), 271–273 (EAH), 298–299 (WQ), and D319 contribute to the S-adenosyl-L-methionine site.

Belongs to the class I-like SAM-binding methyltransferase superfamily. RMT2 methyltransferase family. In terms of assembly, monomer. Interacts with nucleoporins NUP49, NUP57 and NUP100.

The protein resides in the cytoplasm. It localises to the nucleus. S-adenosyl-L-methionine-dependent protein-arginine N-methyltransferase that methylates the delta-nitrogen atom of arginine residues to form N5-methylarginine (type IV) in target proteins. Monomethylates ribosomal protein L12 (RPL12A/RPL12B) at 'Arg-67'. The chain is Protein arginine N-methyltransferase 2 from Saccharomyces cerevisiae (strain ATCC 204508 / S288c) (Baker's yeast).